Reading from the N-terminus, the 93-residue chain is Neurophysin 1 (93 aa).

Intrachain disulfides connect Cys-10–Cys-54, Cys-13–Cys-27, Cys-21–Cys-44, Cys-28–Cys-34, Cys-61–Cys-74, Cys-68–Cys-86, and Cys-75–Cys-80.

This sequence belongs to the vasopressin/oxytocin family.

Its function is as follows. Neurophysin 1 specifically binds oxytocin. The chain is Neurophysin 1 from Struthio camelus (Common ostrich).